A 264-amino-acid polypeptide reads, in one-letter code: JmjC domain-containing protein 8 (264 aa).

The signal sequence occupies residues M1–A23. N130, N140, and N209 each carry an N-linked (GlcNAc...) asparagine glycan. The JmjC domain maps to D131–G264.

In terms of assembly, oligomer. Dimer. Interacts with PKM; regulates angiogenesis and metabolism. N-glycosylated.

The protein localises to the endoplasmic reticulum lumen. It localises to the cytoplasm. Functionally, functions as a positive regulator of TNF-induced NF-kappa-B signaling. Regulates angiogenesis and cellular metabolism through interaction with PKM. The protein is JmjC domain-containing protein 8 of Homo sapiens (Human).